The chain runs to 548 residues: Glucose-6-phosphate isomerase (548 aa).

The Proton donor role is filled by glutamate 353. Residues histidine 384 and lysine 512 contribute to the active site.

This sequence belongs to the GPI family.

It is found in the cytoplasm. It catalyses the reaction alpha-D-glucose 6-phosphate = beta-D-fructose 6-phosphate. It functions in the pathway carbohydrate biosynthesis; gluconeogenesis. It participates in carbohydrate degradation; glycolysis; D-glyceraldehyde 3-phosphate and glycerone phosphate from D-glucose: step 2/4. Its function is as follows. Catalyzes the reversible isomerization of glucose-6-phosphate to fructose-6-phosphate. The polypeptide is Glucose-6-phosphate isomerase (Pseudoalteromonas translucida (strain TAC 125)).